The sequence spans 675 residues: Protein brown (675 aa).

Over 1-419 (MQESGGSSGQ…TEDLRNIRSG (419 aa)) the chain is Cytoplasmic. The ABC transporter domain occupies 34–261 (YSFWNECRKK…EVVAESHESL (228 aa)). 66-73 (GGSGAGKT) provides a ligand contact to ATP. The segment at 229-249 (EDSFETPSGESSASGSGSKSI) is disordered. Positions 236–248 (SGESSASGSGSKS) are enriched in low complexity. The chain crosses the membrane as a helical span at residues 420 to 440 (LIAFGFFMITAVTLSLMYSGI). Topologically, residues 441–460 (GGLTQRTVQDVGGSIFMLSN) are extracellular. Residues 461–481 (EMIFTFSYGVTYIFPAALPII) traverse the membrane as a helical segment. Topologically, residues 482 to 497 (RREVGEGTYSLSAYYV) are cytoplasmic. A helical transmembrane segment spans residues 498–518 (ALVLSFVPVAFFKGYVFLSVI). Residues 519-531 (YASIYYTRGFLLY) are Extracellular-facing. Residues 532–552 (LSMGFLMSLSAVAAVGYGVFL) form a helical membrane-spanning segment. The Cytoplasmic segment spans residues 553-568 (SSLFESDKMASECAAP). A helical membrane pass occupies residues 569 to 589 (FDLIFLIFGGTYMNVDTVPGL). Over 590 to 644 (KYLSLFFYSNEALMYKFWIDIDNIDCPVNEDHPCIKTGVEVLQQGSYRNADYTYW) the chain is Extracellular. Residues 645-665 (LDCFSLVVVAVIFHIVSFGLV) form a helical membrane-spanning segment. Over 666–675 (RRYIHRSGYY) the chain is Cytoplasmic.

This sequence belongs to the ABC transporter superfamily. ABCG family. Eye pigment precursor importer (TC 3.A.1.204) subfamily. May form a heterodimer with w/white.

It localises to the membrane. It carries out the reaction guanine(out) + ATP + H2O = guanine(in) + ADP + phosphate + H(+). It catalyses the reaction riboflavin(in) + ATP + H2O = riboflavin(out) + ADP + phosphate + H(+). The catalysed reaction is (6S)-5,6,7,8-tetrahydrofolate(out) + ATP + H2O = (6S)-5,6,7,8-tetrahydrofolate(in) + ADP + phosphate + H(+). ATP-dependent transporter of the ATP-binding cassette (ABC) family which transports various molecules including bioamines, neurotransmitters and metabolic intermediates. In the eye and probably in association with w/white, required for the transport of the eye red pigment precursor, guanine, into pigment cell granules. In Malpighian tubules, involved in guanine uptake. Probably in association with w/white, involved in aging-induced intestinal stem cell proliferation in the midgut by regulating tetrahydrofolate transport. The sequence is that of Protein brown from Drosophila melanogaster (Fruit fly).